We begin with the raw amino-acid sequence, 462 residues long: Protein ultraspiracle homolog (462 aa).

The interval 1 to 113 (MSSVAKKDKR…NHPLSGSKHL (113 aa)) is modulating. NR C4-type zinc fingers lie at residues 114 to 134 (CSIC…CEGC) and 150 to 174 (CRED…YQKC). The nuclear receptor DNA-binding region spans 114–179 (CSICGDRASG…RYQKCLACGM (66 aa)). The segment at 180-201 (KREAVQEERQRAARRTEDAHPS) is hinge. Positions 204 to 453 (VQELSIERLL…SYIRDALCNH (250 aa)) constitute an NR LBD domain.

It belongs to the nuclear hormone receptor family. NR2 subfamily. In terms of assembly, heterodimer of USP and ECR. As to expression, abundant expression seen in males and ovaries.

It localises to the nucleus. This is Protein ultraspiracle homolog (USP) from Bombyx mori (Silk moth).